Consider the following 643-residue polypeptide: Protein THEMIS2 (643 aa).

2 CABIT regions span residues 1-238 and 239-514; these read MEPV…TASS and RHVH…KAKG. The segment at 546-631 is disordered; sequence EIQAPPPRPP…RQDLDDDEHD (86 aa). A Phosphothreonine modification is found at threonine 593. The segment covering 609–619 has biased composition (basic residues); sequence PAHRKGHRPAK. The residue at position 632 (tyrosine 632) is a Phosphotyrosine.

Belongs to the themis family. In terms of assembly, interacts with VAV1. Interacts with LAT. Interacts constitutively with GRB2, LYN and PLCG2; these interactions increase the activation of PLCG2 and its downstream pathways following B cell receptor stimulation. In terms of processing, phosphorylation at Tyr-632 is induced by LPS. Phosphorylated by Src kinases (Lck or Fyn) following BCR engagement. Expressed in different endometrial adenocarcinoma cell lines and various other cell lines apart from the prostate cell line LNCaP and the ovarian cancer cell line BG1.

It localises to the nucleus. Its subcellular location is the cytoplasm. Functionally, may constitute a control point in macrophage inflammatory response, promoting LPS-induced TLR4-mediated TNF production. Determines the threshold for activation of B cells by low-affinity and low-avidity ligands via PLCG2 activation and its downstream pathways. The chain is Protein THEMIS2 from Homo sapiens (Human).